The primary structure comprises 718 residues: MQSPTLLTFDLPPESRAMSVPFPQRRFSRVSRTQMVRFPDSALAWLQDLAHLTPTDFSLKDEVRNTQSHHLDSAWTSGTVKLRQKPVSFVSAGYSEPLKLLEDIEQDKVPPGEATESKADDMDITTVDVNLNVSAEAVIEKTTLVELDSAAKGKMVLSNSTSQDNPSSETPQEQAQDLFFFDVSGDKAIRDKHRAVHPPPLVPIRKPSLAESDSSEEVILFRGRAGNAKTVPQSNFVVRNGVATNTTTAITPTGDKTKPTAAEETSLRDDPEVIPVAREKRAGRQRSRSKASKIPKTDEDDEEDAILADYIANMSANPEDDFISDQLRSFNNRRDLGGDNFALNLGSGDENDMPVVEDLSGDEQQAESSGSGLSDADEDNGDENDEADEDDDMDADMDDEGLARLLAKQEELGLGSDELVLIPESFGVSKRGAKKGGQKRATPSSFAKSANASSVADAFDDLDLADWTVPVPRKRRSKQPPNFNISDSEIEAKLKLDWSRDRERKKERKLARESLRGQGLLDKNASPDDLRVKYPVGLRLEDFKTELVAFLISSDERLEFPPLDKHGRMVLHQLALKFNVKSQSTGKGTTRRPVLYRSKRTITFKPHQITEATRQVDGAARRVGRKYFPRADVAGPRGDTPRDGFRGSAHVSVKALVLREGEVVGASAPELGQENKGRAMLEKMGWSKGMALGALENKGILEPVAQVVKKSKAGLGRT.

3 disordered regions span residues 247–301 (TTAI…DEDD), 341–404 (FALN…GLAR), and 430–452 (KRGAKKGGQKRATPSSFAKSANA). A compositionally biased stretch (basic and acidic residues) spans 265–282 (TSLRDDPEVIPVAREKRA). Basic residues predominate over residues 283 to 293 (GRQRSRSKASK). The segment covering 375 to 400 (DADEDNGDENDEADEDDDMDADMDDE) has biased composition (acidic residues). The segment covering 442-452 (TPSSFAKSANA) has biased composition (polar residues). The R3H domain maps to 537–599 (GLRLEDFKTE…TRRPVLYRSK (63 aa)). Residues 673–718 (QENKGRAMLEKMGWSKGMALGALENKGILEPVAQVVKKSKAGLGRT) enclose the G-patch domain.

This sequence belongs to the SQS1 family.

The protein resides in the cytoplasm. Its subcellular location is the nucleus. Its function is as follows. May be involved in splicing. This chain is Protein SQS1 (SQS1), found in Podospora anserina (Pleurage anserina).